The sequence spans 295 residues: Small ribosomal subunit protein uS3 (295 aa).

Positions 39-107 constitute a KH type-2 domain; sequence VREYLKKKLK…PVAVNIEEVR (69 aa). The tract at residues 213-295 is disordered; it reads GTGAKMIEVA…AAAADGAKTE (83 aa). Residues 224–245 show a composition bias toward basic and acidic residues; it reads EERKPRGPRRDARPGDRPDRGA. Composition is skewed to low complexity over residues 246-255 and 283-295; these read PRGAPRAPRG and AAPAAAADGAKTE.

This sequence belongs to the universal ribosomal protein uS3 family. Part of the 30S ribosomal subunit. Forms a tight complex with proteins S10 and S14.

Binds the lower part of the 30S subunit head. Binds mRNA in the 70S ribosome, positioning it for translation. The polypeptide is Small ribosomal subunit protein uS3 (Polaromonas naphthalenivorans (strain CJ2)).